The primary structure comprises 506 residues: Kynureninase 1 (506 aa).

Pyridoxal 5'-phosphate contacts are provided by residues L141, T142, 169-172, D254, H257, and Y279; that span reads FPSD. Residue K280 is modified to N6-(pyridoxal phosphate)lysine. Low complexity predominate over residues 303–319; that stretch reads ETAPTTTPDGTNGNPKT. Residues 303–322 are disordered; the sequence is ETAPTTTPDGTNGNPKTISD. Residues W334 and N362 each coordinate pyridoxal 5'-phosphate.

It belongs to the kynureninase family. As to quaternary structure, homodimer. Requires pyridoxal 5'-phosphate as cofactor.

The protein localises to the cytoplasm. The catalysed reaction is L-kynurenine + H2O = anthranilate + L-alanine + H(+). The enzyme catalyses 3-hydroxy-L-kynurenine + H2O = 3-hydroxyanthranilate + L-alanine + H(+). It functions in the pathway amino-acid degradation; L-kynurenine degradation; L-alanine and anthranilate from L-kynurenine: step 1/1. The protein operates within cofactor biosynthesis; NAD(+) biosynthesis; quinolinate from L-kynurenine: step 2/3. In terms of biological role, catalyzes the cleavage of L-kynurenine (L-Kyn) and L-3-hydroxykynurenine (L-3OHKyn) into anthranilic acid (AA) and 3-hydroxyanthranilic acid (3-OHAA), respectively. The sequence is that of Kynureninase 1 from Phaeosphaeria nodorum (strain SN15 / ATCC MYA-4574 / FGSC 10173) (Glume blotch fungus).